The primary structure comprises 728 residues: 1,4-alpha-glucan branching enzyme GlgB (728 aa).

D405 serves as the catalytic Nucleophile. Catalysis depends on E458, which acts as the Proton donor.

It belongs to the glycosyl hydrolase 13 family. GlgB subfamily. In terms of assembly, monomer.

It carries out the reaction Transfers a segment of a (1-&gt;4)-alpha-D-glucan chain to a primary hydroxy group in a similar glucan chain.. It participates in glycan biosynthesis; glycogen biosynthesis. Catalyzes the formation of the alpha-1,6-glucosidic linkages in glycogen by scission of a 1,4-alpha-linked oligosaccharide from growing alpha-1,4-glucan chains and the subsequent attachment of the oligosaccharide to the alpha-1,6 position. The protein is 1,4-alpha-glucan branching enzyme GlgB of Klebsiella pneumoniae subsp. pneumoniae (strain ATCC 700721 / MGH 78578).